The sequence spans 461 residues: Probable tubulin polyglutamylase TTLL9 (461 aa).

Residues 1–10 are compositionally biased toward polar residues; it reads MSRQKNQNSK. The segment at 1-20 is disordered; the sequence is MSRQKNQNSKGHGVSKGKER. Residues 22–402 form the TTL domain; the sequence is QRTLIRFKTT…EARLTGKEKR (381 aa). ATP contacts are provided by residues K149 and 155-156; that span reads QG. Residue Q155 participates in a protein binding. The tract at residues 172–208 is disordered; it reads RKGTSGKKPTGVETQPARANMNPSGSHDTRSSDDQKD. Residues 198–208 are compositionally biased toward basic and acidic residues; that stretch reads HDTRSSDDQKD. ATP-binding positions include 218 to 221 and 231 to 233; these read QRYV and KFD. R257 is a binding site for L-glutamate. Residue 276–277 participates in ATP binding; the sequence is TN. Position 294 (K294) interacts with L-glutamate. D348, E361, and N363 together coordinate Mg(2+). K379 contributes to the L-glutamate binding site.

This sequence belongs to the tubulin--tyrosine ligase family. The cofactor is Mg(2+). As to expression, highly expressed in brain and testis. Expressed in heart, kidney and lung. In the brain, expressed in ependymal cilia, cortex, corpus callosum and striatum. In the testis, specifically expressed in the seminiferous tubules.

The protein localises to the cytoplasm. It localises to the cytoskeleton. Its subcellular location is the cilium basal body. It is found in the flagellum axoneme. The enzyme catalyses (L-glutamyl)(n)-gamma-L-glutamyl-L-glutamyl-[protein] + L-glutamate + ATP = (L-glutamyl)(n+1)-gamma-L-glutamyl-L-glutamyl-[protein] + ADP + phosphate + H(+). In terms of biological role, probable tubulin polyglutamylase that generates side chains of glutamate on the gamma-carboxyl group of specific glutamate residues within the C-terminal tail of target proteins. Similar to TTLL1, may acquire enzymatic activity only in complex with other proteins as it is most likely lacking domains important for autonomous activity. Mediates tubulin polyglutamylation which induces establishment of microtubule heterogeneity in sperm flagella, thereby playing a role in normal motile flagella axoneme structure and sperm flagella beating pattern. In Mus musculus (Mouse), this protein is Probable tubulin polyglutamylase TTLL9.